Reading from the N-terminus, the 217-residue chain is MLPSMLPPKSLRAVRIAVWLLALVPFLRLVVLGATDRYGANPLEFVTRSTGTWTLVLLCCTLAVTPLRRLTGMNWLIRIRRMLGLYTFFYGTLHFLIWLLVDRGLDPASMVKDIAKRPFITVGFAAFVLMIPLAATSTNAMVRRLGGRRWQWLHRLVYVTGVLGILHYWWHKAGKHDFAEVSIYAAVMAVLLGLRVWWVWRGARQGAIAGGAVPLRD.

The next 4 helical transmembrane spans lie at 82–102, 118–138, 150–170, and 180–200; these read MLGL…LLVD, PFIT…ATST, WQWL…HYWW, and EVSI…WWVW.

It belongs to the MsrQ family. As to quaternary structure, heterodimer of a catalytic subunit (MsrP) and a heme-binding subunit (MsrQ). It depends on FMN as a cofactor. Heme b serves as cofactor.

It localises to the cell inner membrane. Part of the MsrPQ system that repairs oxidized periplasmic proteins containing methionine sulfoxide residues (Met-O), using respiratory chain electrons. Thus protects these proteins from oxidative-stress damage caused by reactive species of oxygen and chlorine generated by the host defense mechanisms. MsrPQ is essential for the maintenance of envelope integrity under bleach stress, rescuing a wide series of structurally unrelated periplasmic proteins from methionine oxidation. MsrQ provides electrons for reduction to the reductase catalytic subunit MsrP, using the quinone pool of the respiratory chain. This chain is Protein-methionine-sulfoxide reductase heme-binding subunit MsrQ, found in Ralstonia nicotianae (strain ATCC BAA-1114 / GMI1000) (Ralstonia solanacearum).